The following is a 451-amino-acid chain: UDP-N-acetylmuramoylalanine--D-glutamate ligase (451 aa).

Residue 118–124 coordinates ATP; the sequence is GSNGKTT.

Belongs to the MurCDEF family.

Its subcellular location is the cytoplasm. It catalyses the reaction UDP-N-acetyl-alpha-D-muramoyl-L-alanine + D-glutamate + ATP = UDP-N-acetyl-alpha-D-muramoyl-L-alanyl-D-glutamate + ADP + phosphate + H(+). Its pathway is cell wall biogenesis; peptidoglycan biosynthesis. Functionally, cell wall formation. Catalyzes the addition of glutamate to the nucleotide precursor UDP-N-acetylmuramoyl-L-alanine (UMA). The chain is UDP-N-acetylmuramoylalanine--D-glutamate ligase from Shouchella clausii (strain KSM-K16) (Alkalihalobacillus clausii).